The sequence spans 251 residues: Guanine nucleotide-binding protein subunit gamma 3 (251 aa).

Residues 1-10 (MSAPSGGGEG) show a composition bias toward gly residues. A disordered region spans residues 1-44 (MSAPSGGGEGGGKESAAGGVSSSSLAPSSLPPPRPKSPPEYPDL). Residues 14–28 (ESAAGGVSSSSLAPS) are compositionally biased toward low complexity. Pro residues predominate over residues 29-41 (SLPPPRPKSPPEY). The region spanning 46–126 (GKRREAARVQ…LSLVSFCCCC (81 aa)) is the G protein gamma domain. At Cys248 the chain carries Cysteine methyl ester. A lipid anchor (S-farnesyl cysteine) is attached at Cys248. Residues 249–251 (LAF) constitute a propeptide, removed in mature form.

As to quaternary structure, g proteins are composed of 3 units, alpha, beta and gamma. In terms of tissue distribution, expressed in flowers and siliques.

Functionally, guanine nucleotide-binding proteins (G proteins) are involved as a modulator or transducer in various transmembrane signaling systems. The beta and gamma chains are required for the GTPase activity, for replacement of GDP by GTP, and for G protein-effector interaction. In Arabidopsis thaliana (Mouse-ear cress), this protein is Guanine nucleotide-binding protein subunit gamma 3 (GG3).